The primary structure comprises 63 residues: Gallinacin-4 (63 aa).

Positions 1-19 (MKILCFFIVLLFVAVHGAV) are cleaved as a signal peptide. Positions 20–25 (GFSRSP) are excised as a propeptide. Cystine bridges form between cysteine 31-cysteine 59, cysteine 38-cysteine 53, and cysteine 43-cysteine 60.

It belongs to the beta-defensin family. As to expression, strong expression in the bone marrow and testis. Widely expressed. Weak expression in the ovarian stroma, but not expressed in the ovarian follicles.

Its subcellular location is the secreted. It localises to the cytoplasmic granule. Its function is as follows. Has bactericidal activity. Potent activity against S.typhimurium and S.entiriditis. This is Gallinacin-4 (GAL4) from Gallus gallus (Chicken).